The primary structure comprises 92 residues: Large ribosomal subunit protein eL31 (92 aa).

Belongs to the eukaryotic ribosomal protein eL31 family.

In Desulfurococcus amylolyticus (strain DSM 18924 / JCM 16383 / VKM B-2413 / 1221n) (Desulfurococcus kamchatkensis), this protein is Large ribosomal subunit protein eL31.